We begin with the raw amino-acid sequence, 227 residues long: MEPAPLVRPRSYVVRGRKTDAQQRAIAEFWPAFGVDFAGGLLDLDALFGRTAPRTVEIGFGNGENLLALAERHPERDFLGVEVHGAGVGRVFAAMRERGLSNIRVIRHDAVEVFETGLSAGSVAEALLFFPDPWPKARHHRRRLVQPDVVRLLARALAADGVLRLATDWEPYADHMLAVLDAEPVLVNVAGPGAFIPRPEARPVTKFERRGEKLGHSIFDLEYRPLP.

S-adenosyl-L-methionine-binding residues include glutamate 57, glutamate 82, aspartate 109, and aspartate 132. Aspartate 132 is a catalytic residue. Substrate is bound by residues lysine 136, aspartate 168, and 205–208 (TKFE).

Belongs to the class I-like SAM-binding methyltransferase superfamily. TrmB family.

The catalysed reaction is guanosine(46) in tRNA + S-adenosyl-L-methionine = N(7)-methylguanosine(46) in tRNA + S-adenosyl-L-homocysteine. It functions in the pathway tRNA modification; N(7)-methylguanine-tRNA biosynthesis. In terms of biological role, catalyzes the formation of N(7)-methylguanine at position 46 (m7G46) in tRNA. The polypeptide is tRNA (guanine-N(7)-)-methyltransferase (Leifsonia xyli subsp. xyli (strain CTCB07)).